The primary structure comprises 218 residues: Copper acquisition factor BIM1 (218 aa).

Positions 1–19 (MFALKSILVTSLITSTALA) are cleaved as a signal peptide. Residues His-20 and His-65 each coordinate Cu(2+). N-linked (GlcNAc...) asparagine glycosylation is found at Asn-87, Asn-91, and Asn-124. Asp-138 serves as a coordination point for Cu(2+). N-linked (GlcNAc...) asparagine glycans are attached at residues Asn-158 and Asn-170. Positions 160-194 (TCTNDASKASNATSTSSGSATATSAAATSSSSGTS) are disordered. Residues 165 to 194 (ASKASNATSTSSGSATATSAAATSSSSGTS) are compositionally biased toward low complexity. A lipid anchor (GPI-anchor amidated serine) is attached at Ser-190. Residues 191 to 218 (SGTSGAIKEVVGFGALSLALGIAGLIIL) constitute a propeptide, removed in mature form.

This sequence belongs to the X325 family. In terms of assembly, interacts with the CUF1-dependent copper transporter CTR1. The cofactor is Cu(2+).

It is found in the cell membrane. Functionally, lytic polysaccharide monooxygenase-like protein that has diverged to biological functions other than polysaccharide degradation since it does not perform oxidative cleavage of polysaccharides. Cell surface-bound protein that functions in the copper-accumulation pathway shared by the CUF1-dependent copper transporter CTR1. Involved in maintaining cell wall integrity during copper deficiency. Binds Cu(2+) with an estimated 1:1 stoichiometry and might serve as an extracellular copper ligand. FRE4 and FRE7 metalloreductases probably function together with CTR1 and BIM1 to liberate the Cu(2+) bound to the BIM1 copper-binding site for subsequent import of Cu(+) into the cell by CTR1, via the reduction of BIM1-bound Cu(2+) to Cu(+) to reduce binding affinity for BIM1 but increase affinity for CTR1. Facilitates copper acquisition in the brain of mammalian hosts and acts as a copper-dependent virulence trait in fungal meningitis. While BIM1 plays a critical role in cryptococcal meningitis, at least in part through its role in copper acquisition, it could play additional roles during copper limitation or as a means to invade and colonize host tissues in the brain, by compromising host carbohydrate integrity via its lytic polysaccharide monooxygenase (LPMO) activity, which has still to be determined. This is Copper acquisition factor BIM1 from Cryptococcus neoformans var. grubii serotype A (strain H99 / ATCC 208821 / CBS 10515 / FGSC 9487) (Filobasidiella neoformans var. grubii).